The primary structure comprises 568 residues: Vitamin H transporter 1 (568 aa).

12 consecutive transmembrane segments (helical) span residues 85–105 (IIPC…TVSL), 123–143 (GYSA…YIIF), 158–178 (IWVS…AVLG), 187–207 (YVAL…GLAY), 222–242 (IGWY…VSAG), 257–277 (WMFL…PWWL), 345–365 (VWPF…IFNY), 384–404 (LLNA…MPLY), 411–431 (FSFF…ANYA), 439–459 (GGLL…MAWC), 470–490 (VGVA…SVVT), and 508–528 (NDVC…EFLL). Residues 547–568 (VEDEQEMTDIKPALPSSQQADA) form a disordered region.

The protein belongs to the major facilitator superfamily. Allantoate permease family.

Its subcellular location is the membrane. Its function is as follows. Involved in uptake of biotin and desthiobiotin with the concomitant entry of protons. The sequence is that of Vitamin H transporter 1 (vht1) from Schizosaccharomyces pombe (strain 972 / ATCC 24843) (Fission yeast).